A 68-amino-acid chain; its full sequence is DNA-directed RNA polymerase subunit omega (68 aa).

It belongs to the RNA polymerase subunit omega family. The RNAP catalytic core consists of 2 alpha, 1 beta, 1 beta' and 1 omega subunit. When a sigma factor is associated with the core the holoenzyme is formed, which can initiate transcription.

It carries out the reaction RNA(n) + a ribonucleoside 5'-triphosphate = RNA(n+1) + diphosphate. In terms of biological role, promotes RNA polymerase assembly. Latches the N- and C-terminal regions of the beta' subunit thereby facilitating its interaction with the beta and alpha subunits. The protein is DNA-directed RNA polymerase subunit omega of Brevibacillus brevis (strain 47 / JCM 6285 / NBRC 100599).